The sequence spans 988 residues: Squamosa promoter-binding-like protein 16 (988 aa).

Residues 52 to 79 are disordered; it reads GTPVDLTRPSKKVRSGSPGSGGGGGGNY. The span at 69–78 shows a compositional bias: gly residues; that stretch reads PGSGGGGGGN. The segment at 79–156 adopts an SBP-type zinc-finger fold; sequence YPKCQVDNCK…DGHNRRRRKT (78 aa). Positions 82, 87, 104, 107, 123, 126, 130, and 142 each coordinate Zn(2+). The Bipartite nuclear localization signal motif lies at 139–155; sequence KRSCRRRLDGHNRRRRK. Disordered regions lie at residues 240–262 and 289–416; these read RKNPEQPSPMNPQNSMNGASSPS and GFGN…DTST. 3 stretches are compositionally biased toward polar residues: residues 250 to 262, 301 to 311, and 327 to 358; these read NPQNSMNGASSPS, LTSSDHSATTS, and RTSSTNHSPSQYSDSRGQDTRSSLSLQLFTSS. Residues 368 to 379 are compositionally biased toward low complexity; the sequence is ASSTKYYSSASS.

It depends on Zn(2+) as a cofactor.

It is found in the nucleus. Trans-acting factor that binds specifically to the consensus nucleotide sequence 5'-TNCGTACAA-3'. This chain is Squamosa promoter-binding-like protein 16 (SPL16), found in Arabidopsis thaliana (Mouse-ear cress).